A 101-amino-acid polypeptide reads, in one-letter code: Albumin (101 aa).

2 Albumin domains span residues Asp-1–Tyr-80 and Glu-81–Leu-101. Residue His-4 participates in Cu cation binding.

The protein belongs to the ALB/AFP/VDB family. As to expression, plasma.

It localises to the secreted. In terms of biological role, binds water, Ca(2+), Na(+), K(+), fatty acids, hormones, bilirubin and drugs. Its main function is the regulation of the colloidal osmotic pressure of blood. The protein is Albumin (alb) of Neoceratodus forsteri (Australian lungfish).